The following is a 200-amino-acid chain: Signal peptidase complex catalytic subunit SEC11 (200 aa).

Residues 1–15 are Cytoplasmic-facing; that stretch reads MFAELAPYLSNPRQT. The helical; Signal-anchor for type II membrane protein transmembrane segment at 16 to 33 threads the bilayer; it reads LAQLLNFALVLSTAFMGW. Topologically, residues 34–200 are lumenal; it reads KALSVYTNSS…MGVMVMLQRE (167 aa). N-linked (GlcNAc...) asparagine glycosylation occurs at N41. Active-site charge relay system residues include S53 and H92. Residues 101 to 134 form a disordered region; the sequence is GDGGKKSQRRLEREADKRSGPGLSSPVSHQMLTK. A compositionally biased stretch (basic and acidic residues) spans 103-119; sequence GGKKSQRRLEREADKRS. The Charge relay system role is filled by D142. Positions 186–197 are C-terminal short (CTS) helix; that stretch reads VLLGIMGVMVML.

Belongs to the peptidase S26B family. Component of the signal peptidase complex (SPC) composed of a catalytic subunit SEC11 and three accessory subunits SPC1, SPC2 and SPC3. The complex induces a local thinning of the ER membrane which is used to measure the length of the signal peptide (SP) h-region of protein substrates. This ensures the selectivity of the complex towards h-regions shorter than 18-20 amino acids. SPC associates with the translocon complex.

It localises to the endoplasmic reticulum membrane. The catalysed reaction is Cleavage of hydrophobic, N-terminal signal or leader sequences from secreted and periplasmic proteins.. In terms of biological role, catalytic component of the signal peptidase complex (SPC) which catalyzes the cleavage of N-terminal signal sequences from nascent proteins as they are translocated into the lumen of the endoplasmic reticulum. Specifically cleaves N-terminal signal peptides that contain a hydrophobic alpha-helix (h-region) shorter than 18-20 amino acids. The polypeptide is Signal peptidase complex catalytic subunit SEC11 (SEC11) (Arthroderma benhamiae (strain ATCC MYA-4681 / CBS 112371) (Trichophyton mentagrophytes)).